A 207-amino-acid polypeptide reads, in one-letter code: Guanylate kinase (207 aa).

The Guanylate kinase-like domain occupies 5–183 (GTLYIISAPS…ALYELEAIVE (179 aa)). Residue 12-19 (APSGAGKT) participates in ATP binding.

This sequence belongs to the guanylate kinase family.

The protein localises to the cytoplasm. It carries out the reaction GMP + ATP = GDP + ADP. Functionally, essential for recycling GMP and indirectly, cGMP. The sequence is that of Guanylate kinase from Alcanivorax borkumensis (strain ATCC 700651 / DSM 11573 / NCIMB 13689 / SK2).